The primary structure comprises 463 residues: Ribosomal protein uS12 methylthiotransferase RimO (463 aa).

The 116-residue stretch at proline 15–proline 130 folds into the MTTase N-terminal domain. Cysteine 24, cysteine 60, cysteine 89, cysteine 161, cysteine 165, and cysteine 168 together coordinate [4Fe-4S] cluster. Positions leucine 147–alanine 392 constitute a Radical SAM core domain. One can recognise a TRAM domain in the interval alanine 395 to valine 463.

Belongs to the methylthiotransferase family. RimO subfamily. [4Fe-4S] cluster serves as cofactor.

Its subcellular location is the cytoplasm. The enzyme catalyses L-aspartate(89)-[ribosomal protein uS12]-hydrogen + (sulfur carrier)-SH + AH2 + 2 S-adenosyl-L-methionine = 3-methylsulfanyl-L-aspartate(89)-[ribosomal protein uS12]-hydrogen + (sulfur carrier)-H + 5'-deoxyadenosine + L-methionine + A + S-adenosyl-L-homocysteine + 2 H(+). In terms of biological role, catalyzes the methylthiolation of an aspartic acid residue of ribosomal protein uS12. In Burkholderia pseudomallei (strain 668), this protein is Ribosomal protein uS12 methylthiotransferase RimO.